Reading from the N-terminus, the 365-residue chain is MTKMLAVGLMSGTSLDGIDAALIETDGAGHIRPIAFRSDPYAAQAREQLREAAALALSFDAPRPSPKIAAAEAMLTDRHVAAVRQLLAAARVEAGQVDVIGFHGQTIAHRPDRGWTWQIGDGAAMARALGIRVVNDLRSADVAAGGQGAPLLPVYHRALTAGMEGPVAVLNLGGVANITWLGAGEGELIAFDTGPANGLIDDWMLQETGSPYDAHGAFAARGTVDRAVLGAMLDNDWFDAPPPKSLDRADFTIQPARGLSAADGAATLTAFTAETVALALRHLPAPPRRLIVAGGGRHNPTLMKMIATATKITPEPIEALGWNGDATEAEGFAYMAVRSLKGQAISFPGTTGVAEPLTGGVTHRP.

Residue 12–19 (GTSLDGID) coordinates ATP.

This sequence belongs to the anhydro-N-acetylmuramic acid kinase family.

It catalyses the reaction 1,6-anhydro-N-acetyl-beta-muramate + ATP + H2O = N-acetyl-D-muramate 6-phosphate + ADP + H(+). Its pathway is amino-sugar metabolism; 1,6-anhydro-N-acetylmuramate degradation. It participates in cell wall biogenesis; peptidoglycan recycling. Functionally, catalyzes the specific phosphorylation of 1,6-anhydro-N-acetylmuramic acid (anhMurNAc) with the simultaneous cleavage of the 1,6-anhydro ring, generating MurNAc-6-P. Is required for the utilization of anhMurNAc either imported from the medium or derived from its own cell wall murein, and thus plays a role in cell wall recycling. This is Anhydro-N-acetylmuramic acid kinase from Rhizorhabdus wittichii (strain DSM 6014 / CCUG 31198 / JCM 15750 / NBRC 105917 / EY 4224 / RW1) (Sphingomonas wittichii).